The following is a 539-amino-acid chain: Chaperonin GroEL 1 (539 aa).

Residues 29–32, 86–90, Gly-413, and Asp-493 each bind ATP; these read TLGP and DGTTT.

The protein belongs to the chaperonin (HSP60) family. Forms a cylinder of 14 subunits composed of two heptameric rings stacked back-to-back. Interacts with the co-chaperonin GroES.

The protein localises to the cytoplasm. It carries out the reaction ATP + H2O + a folded polypeptide = ADP + phosphate + an unfolded polypeptide.. Together with its co-chaperonin GroES, plays an essential role in assisting protein folding. The GroEL-GroES system forms a nano-cage that allows encapsulation of the non-native substrate proteins and provides a physical environment optimized to promote and accelerate protein folding. The chain is Chaperonin GroEL 1 from Acidothermus cellulolyticus (strain ATCC 43068 / DSM 8971 / 11B).